The sequence spans 688 residues: Sodium channel and clathrin linker 1 (688 aa).

Ala-2 carries the N-acetylalanine modification. A coiled-coil region spans residues 69–673 (ELNGQLKYYQ…SASQQLSVIT (605 aa)). Ser-681 bears the Phosphoserine mark.

As to quaternary structure, interacts with SCN10A and clathrin. Identified in a complex containing SCN10A, clathrin and SCLT1.

It is found in the cytoplasm. The protein localises to the cytoskeleton. It localises to the microtubule organizing center. Its subcellular location is the centrosome. The protein resides in the centriole. Adapter protein that links SCN10A to clathrin. Regulates SCN10A channel activity, possibly by promoting channel internalization. This is Sodium channel and clathrin linker 1 (SCLT1) from Homo sapiens (Human).